We begin with the raw amino-acid sequence, 226 residues long: ATP synthase F(0) complex subunit a (226 aa).

6 helical membrane passes run 12–32, 68–88, 97–117, 138–158, 182–202, and 203–223; these read PTVL…LLIP, WSLM…LGLL, QLSM…AMGL, IPML…ALAV, LAIN…LTIL, and ETAI…LYLH.

The protein belongs to the ATPase A chain family. As to quaternary structure, component of the ATP synthase complex composed at least of ATP5F1A/subunit alpha, ATP5F1B/subunit beta, ATP5MC1/subunit c (homooctomer), MT-ATP6/subunit a, MT-ATP8/subunit 8, ATP5ME/subunit e, ATP5MF/subunit f, ATP5MG/subunit g, ATP5MK/subunit k, ATP5MJ/subunit j, ATP5F1C/subunit gamma, ATP5F1D/subunit delta, ATP5F1E/subunit epsilon, ATP5PF/subunit F6, ATP5PB/subunit b, ATP5PD/subunit d, ATP5PO/subunit OSCP. ATP synthase complex consists of a soluble F(1) head domain (subunits alpha(3) and beta(3)) - the catalytic core - and a membrane F(0) domain - the membrane proton channel (subunits c, a, 8, e, f, g, k and j). These two domains are linked by a central stalk (subunits gamma, delta, and epsilon) rotating inside the F1 region and a stationary peripheral stalk (subunits F6, b, d, and OSCP). Interacts with DNAJC30; interaction is direct.

It localises to the mitochondrion inner membrane. The catalysed reaction is H(+)(in) = H(+)(out). Subunit a, of the mitochondrial membrane ATP synthase complex (F(1)F(0) ATP synthase or Complex V) that produces ATP from ADP in the presence of a proton gradient across the membrane which is generated by electron transport complexes of the respiratory chain. ATP synthase complex consist of a soluble F(1) head domain - the catalytic core - and a membrane F(1) domain - the membrane proton channel. These two domains are linked by a central stalk rotating inside the F(1) region and a stationary peripheral stalk. During catalysis, ATP synthesis in the catalytic domain of F(1) is coupled via a rotary mechanism of the central stalk subunits to proton translocation. With the subunit c (ATP5MC1), forms the proton-conducting channel in the F(0) domain, that contains two crucial half-channels (inlet and outlet) that facilitate proton movement from the mitochondrial intermembrane space (IMS) into the matrix. Protons are taken up via the inlet half-channel and released through the outlet half-channel, following a Grotthuss mechanism. The sequence is that of ATP synthase F(0) complex subunit a from Pongo abelii (Sumatran orangutan).